Reading from the N-terminus, the 162-residue chain is Phosphopantetheine adenylyltransferase (162 aa).

Threonine 10 is a substrate binding site. ATP-binding positions include 10–11 and histidine 18; that span reads TF. Positions 42, 74, and 88 each coordinate substrate. ATP contacts are provided by residues 89–91, glutamate 99, and 124–130; these read GLR and NSFISST.

The protein belongs to the bacterial CoaD family. As to quaternary structure, homohexamer. Mg(2+) is required as a cofactor.

Its subcellular location is the cytoplasm. The enzyme catalyses (R)-4'-phosphopantetheine + ATP + H(+) = 3'-dephospho-CoA + diphosphate. It participates in cofactor biosynthesis; coenzyme A biosynthesis; CoA from (R)-pantothenate: step 4/5. In terms of biological role, reversibly transfers an adenylyl group from ATP to 4'-phosphopantetheine, yielding dephospho-CoA (dPCoA) and pyrophosphate. The chain is Phosphopantetheine adenylyltransferase from Alteromonas mediterranea (strain DSM 17117 / CIP 110805 / LMG 28347 / Deep ecotype).